Here is a 653-residue protein sequence, read N- to C-terminus: Zinc finger protein 59 (653 aa).

A KRAB domain is found at 14 to 86 (VTFRDVAVDF…VNEETGRPSP (73 aa)). C2H2-type zinc fingers lie at residues 172–194 (YECKECGKCFGCRSTLTQHQSVH), 200–222 (YECKECGKAFRLPQQLTRHQKCH), 256–278 (FACRECGKSFNRVSSLVEHGLIH), 284–306 (YECNECGKAFKRHRSFVRHQKIH), 312–334 (FQCKDCGKGFIVLAHLTRHQSSH), 340–362 (FECEECGKKFRTARHLVKHQRIH), 368–390 (FECNVCGSAFRLQLYLSEHQKTH), 396–418 (LECNVCGKAFRLQVYLSEHLKTH), 424–446 (FKCKLCGSAFPNKYQLNKHLTVH), 452–474 (YQCKECGKCFRQRSKLTEHESIH), 480–502 (FQCEECGKFFRLNTLLIHHQKSH), 508–530 (FECKECGKAFLLPSQLNSHKIVH), 536–558 (FECKVCGKSFKRESNLIQHGAVH), 564–586 (YECSECGKGFIHRSSLFHHRKIH), 592–614 (FKCQECGKAFVVLAYLIQHQSIH), and 620–642 (FECELCGSAFRCRSQLNKHLRIH).

The protein belongs to the krueppel C2H2-type zinc-finger protein family. Expressed predominantly in the testis (at protein level).

Its subcellular location is the nucleus. Its function is as follows. May have a role during differentiation processes. This Mus musculus (Mouse) protein is Zinc finger protein 59 (Zfp59).